The following is an 875-amino-acid chain: MSDSDKKPTLGRRPLGLKTAVEAGEVKQTFSHGRTNKVVVEVKRRKLMGRPGEAAPTAAPAAAATPAPTPVAPPPPPPPPPPPPSASRETRQEMQVRLLREAEEARLAALEAANRREQEERLRAIEEERRRAEEKARAEAEAAAAPAAPAAPAAPSAAPAAAQSAPEAAPAPVAEPEVARQPEAAPVAATAPAAPKAEEAKPAAPAVPAPRRFTPVAPAAPIKRPELAAKKPAHPQRDRKTEDRRGGKLTVTRALNEDEGARARSLAALKRAREKERRAHFAGQSQPREKQVRDVVVPDAITVQDLANRMAEKAADLVKALFKMGMMVTINQTIDQDTAELLVTEFGHNIQRVSESDADIDTSADVDPEESLKARPPVVTIMGHVDHGKTSLLDALRGTDVVRGEAGGITQHIGAYQIKTKGGDFITFLDTPGHEAFTEMRIRGANVTDIVILVVAGDDGLMPQTIEAINHTKAAGVPMIVAITKADKPEFQPQKIRERLLEHEIIVEAMSGDVQDVEVSAKTGAGLDELIEKILLQAELLELKANPDRSAEATVIEAKLDKGKGPLATVLVNRGTLKVGDILVVGTQSGRVRAMLDDKGRQVKAAGPSLPVEVLGIGGVPMAGDTLTVVESEARAREVAAYRQERATAKRTAQAPASLENMFSALAAKNAVIEYPLVIRADVQGSAEAIVNALNKISTDEIKVRILASGVGAITESDVNLAQASGAPIVGFNVRPNAKARELIERNKVRMKYFDVIYQLTDDIRSEMAGELGPEAIETVVGRAEVKEVFPAGKRDKAAGLLVVEGVIRKGLHARLTRNDVIVSRTTIASLRRFKDDVPEVRAGLECGVLLQDTNDIKAGDQLEVFEVEMRERTL.

Disordered regions lie at residues 1 to 20 (MSDS…LKTA), 47 to 102 (LMGR…LREA), and 126 to 246 (EEER…DRRG). Low complexity predominate over residues 54–66 (AAPTAAPAAAATP). Over residues 67–85 (APTPVAPPPPPPPPPPPPS) the composition is skewed to pro residues. Composition is skewed to basic and acidic residues over residues 88-102 (RETR…LREA) and 126-140 (EEER…RAEA). 2 stretches are compositionally biased toward low complexity: residues 141-195 (EAAA…PAAP) and 202-221 (PAAP…PAAP). Over residues 223-246 (KRPELAAKKPAHPQRDRKTEDRRG) the composition is skewed to basic and acidic residues. The tr-type G domain occupies 374-544 (ARPPVVTIMG…LLQAELLELK (171 aa)). Residues 383-390 (GHVDHGKT) form a G1 region. 383 to 390 (GHVDHGKT) contacts GTP. The G2 stretch occupies residues 408–412 (GITQH). The tract at residues 430–433 (DTPG) is G3. GTP is bound by residues 430–434 (DTPGH) and 484–487 (TKAD). The tract at residues 484–487 (TKAD) is G4. The segment at 520 to 522 (SAK) is G5.

This sequence belongs to the TRAFAC class translation factor GTPase superfamily. Classic translation factor GTPase family. IF-2 subfamily.

Its subcellular location is the cytoplasm. Its function is as follows. One of the essential components for the initiation of protein synthesis. Protects formylmethionyl-tRNA from spontaneous hydrolysis and promotes its binding to the 30S ribosomal subunits. Also involved in the hydrolysis of GTP during the formation of the 70S ribosomal complex. The polypeptide is Translation initiation factor IF-2 (Novosphingobium aromaticivorans (strain ATCC 700278 / DSM 12444 / CCUG 56034 / CIP 105152 / NBRC 16084 / F199)).